A 262-amino-acid polypeptide reads, in one-letter code: Acyl-[acyl-carrier-protein]--UDP-N-acetylglucosamine O-acyltransferase (262 aa).

This sequence belongs to the transferase hexapeptide repeat family. LpxA subfamily. In terms of assembly, homotrimer.

It is found in the cytoplasm. The catalysed reaction is a (3R)-hydroxyacyl-[ACP] + UDP-N-acetyl-alpha-D-glucosamine = a UDP-3-O-[(3R)-3-hydroxyacyl]-N-acetyl-alpha-D-glucosamine + holo-[ACP]. It functions in the pathway glycolipid biosynthesis; lipid IV(A) biosynthesis; lipid IV(A) from (3R)-3-hydroxytetradecanoyl-[acyl-carrier-protein] and UDP-N-acetyl-alpha-D-glucosamine: step 1/6. In terms of biological role, involved in the biosynthesis of lipid A, a phosphorylated glycolipid that anchors the lipopolysaccharide to the outer membrane of the cell. The polypeptide is Acyl-[acyl-carrier-protein]--UDP-N-acetylglucosamine O-acyltransferase (Salmonella arizonae (strain ATCC BAA-731 / CDC346-86 / RSK2980)).